A 149-amino-acid chain; its full sequence is Arginine repressor (149 aa).

This sequence belongs to the ArgR family.

It localises to the cytoplasm. It functions in the pathway amino-acid biosynthesis; L-arginine biosynthesis [regulation]. Regulates arginine biosynthesis genes. The sequence is that of Arginine repressor from Bacillus mycoides (strain KBAB4) (Bacillus weihenstephanensis).